A 124-amino-acid polypeptide reads, in one-letter code: MATINQLVRKPRARKVAKSNVPALEACPQKRGVCTRVYTTTPKKPNSALRKVCRVRLTNGFEVTSYIGGEGHNLQEHSVILIRGGRVKDLPGVRYHTVRGALDCSGVKDRKQARSKYGVKRPKA.

D89 carries the post-translational modification 3-methylthioaspartic acid.

It belongs to the universal ribosomal protein uS12 family. In terms of assembly, part of the 30S ribosomal subunit. Contacts proteins S8 and S17. May interact with IF1 in the 30S initiation complex.

Functionally, with S4 and S5 plays an important role in translational accuracy. Interacts with and stabilizes bases of the 16S rRNA that are involved in tRNA selection in the A site and with the mRNA backbone. Located at the interface of the 30S and 50S subunits, it traverses the body of the 30S subunit contacting proteins on the other side and probably holding the rRNA structure together. The combined cluster of proteins S8, S12 and S17 appears to hold together the shoulder and platform of the 30S subunit. This chain is Small ribosomal subunit protein uS12, found in Klebsiella pneumoniae (strain 342).